We begin with the raw amino-acid sequence, 161 residues long: DNA-directed RNA polymerase III subunit RPC9 (161 aa).

The segment at 75–96 (QEDEGEERESSGAKDAEKSGIS) is disordered. Residues 82–96 (RESSGAKDAEKSGIS) show a composition bias toward basic and acidic residues.

It belongs to the eukaryotic RPC9 RNA polymerase subunit family. As to quaternary structure, component of the RNA polymerase III (Pol III) complex consisting of 17 subunits. Forms a Pol III subcomplex with RPC25/RPC8. Interacts with BURF1/TDS4.

The protein resides in the nucleus. Its function is as follows. DNA-dependent RNA polymerase catalyzes the transcription of DNA into RNA using the four ribonucleoside triphosphates as substrates. Specific peripheric component of RNA polymerase III which synthesizes small RNAs, such as 5S rRNA and tRNAs. The RPC25/RPC8-RPC17/RPC9 subcomplex may bind Pol III transcripts emerging from the adjacent exit pore during elongation. The sequence is that of DNA-directed RNA polymerase III subunit RPC9 (RPC17) from Saccharomyces cerevisiae (strain ATCC 204508 / S288c) (Baker's yeast).